A 148-amino-acid chain; its full sequence is DNA-directed RNA polymerase II subunit GRINL1A, isoforms 4/5 (148 aa).

A disordered region spans residues 1–66; the sequence is MATPARAPES…AEFGGAAGNV (66 aa). Over residues 53–66 the composition is skewed to low complexity; it reads GLGAAEFGGAAGNV.

The sequence is that of DNA-directed RNA polymerase II subunit GRINL1A, isoforms 4/5 (POLR2M) from Homo sapiens (Human).